The following is a 269-amino-acid chain: Tryptophan synthase alpha chain (269 aa).

Active-site proton acceptor residues include Glu49 and Asp60.

This sequence belongs to the TrpA family. In terms of assembly, tetramer of two alpha and two beta chains.

The enzyme catalyses (1S,2R)-1-C-(indol-3-yl)glycerol 3-phosphate + L-serine = D-glyceraldehyde 3-phosphate + L-tryptophan + H2O. It functions in the pathway amino-acid biosynthesis; L-tryptophan biosynthesis; L-tryptophan from chorismate: step 5/5. The alpha subunit is responsible for the aldol cleavage of indoleglycerol phosphate to indole and glyceraldehyde 3-phosphate. This Buchnera aphidicola subsp. Schlechtendalia chinensis protein is Tryptophan synthase alpha chain.